We begin with the raw amino-acid sequence, 393 residues long: uncharacterized protein (393 aa).

The 265-residue stretch at 2-266 (AMIGLVGKPN…AEKAGIIKRK (265 aa)) folds into the OBG-type G domain. Residues 8–15 (GKPNVGKS) and 78–82 (DVAGL) contribute to the GTP site. Residues 314-390 (DMIVVYPVED…KHNDIIKIVS (77 aa)) form the TGS domain.

The protein belongs to the TRAFAC class OBG-HflX-like GTPase superfamily. OBG GTPase family.

This is an uncharacterized protein from Methanocaldococcus jannaschii (strain ATCC 43067 / DSM 2661 / JAL-1 / JCM 10045 / NBRC 100440) (Methanococcus jannaschii).